The following is a 212-amino-acid chain: Large ribosomal subunit protein mL48 (212 aa).

The N-terminal 28 residues, 1-28, are a transit peptide targeting the mitochondrion; that stretch reads MNGALGKVLCLKNDTIFKQAFSLLRFRT. K199 carries the post-translational modification N6-succinyllysine.

Belongs to the mitochondrion-specific ribosomal protein mL48 family. In terms of assembly, component of the mitochondrial ribosome large subunit (39S) which comprises a 16S rRNA and about 50 distinct proteins. Interacts with OXA1L.

The protein resides in the mitochondrion. The polypeptide is Large ribosomal subunit protein mL48 (MRPL48) (Bos taurus (Bovine)).